Here is a 350-residue protein sequence, read N- to C-terminus: Melatonin receptor type 1A-A (350 aa).

Over 1-29 (MFMNGSSLNSSALDPSEQALQRPPWVTTT) the chain is Extracellular. Residues N4 and N9 are each glycosylated (N-linked (GlcNAc...) asparagine). A helical membrane pass occupies residues 30–50 (LGCFLIFTIVVDILGNLLVIF). At 51–63 (SVYRNKKLQNAGN) the chain is on the cytoplasmic side. Residues 64–84 (IFVVSLAVADLVVAIYPYPLV) traverse the membrane as a helical segment. Topologically, residues 85–101 (LTSIFHRGWNLGYMHCQ) are extracellular. C100 and C177 are oxidised to a cystine. Residues 102 to 122 (ISGFLMGVSVIGSIFNITGIA) traverse the membrane as a helical segment. Residues 123–144 (INCYCYICHSLKYDKLYSDKNS) are Cytoplasmic-facing. A helical transmembrane segment spans residues 145 to 165 (VCYVLLIWALTVLAIVPNLFV). The Extracellular portion of the chain corresponds to 166-187 (GSLQYDPRVYSCTFEQSASSAY). The helical transmembrane segment at 188–208 (TIAVVFFHFILPIMIVTYCYL) threads the bilayer. The Cytoplasmic portion of the chain corresponds to 209–240 (RIWVLVIQVRRRVKNDNRPKITPHDVRNFVTM). The helical transmembrane segment at 241-261 (FVVFVLFAVCWAPLNFIGLAV) threads the bilayer. The Extracellular portion of the chain corresponds to 262 to 267 (AISPER). The helical transmembrane segment at 268-288 (VVPLIPEWLFVASYFMAYFNS) threads the bilayer. The Cytoplasmic segment spans residues 289 to 350 (CLNAIVYGVL…NNNQVKVDSV (62 aa)).

The protein belongs to the G-protein coupled receptor 1 family.

The protein resides in the cell membrane. Its function is as follows. High affinity receptor for melatonin. The activity of this receptor is mediated by pertussis toxin sensitive G proteins that inhibits adenylate cyclase activity. The chain is Melatonin receptor type 1A-A (mtnr1aa) from Danio rerio (Zebrafish).